Here is a 309-residue protein sequence, read N- to C-terminus: Isopentenyl-diphosphate Delta-isomerase II (309 aa).

Substrate is bound at residue K112. Positions 116 and 128 each coordinate Mg(2+). In terms of domain architecture, Nudix hydrolase spans 126–278 (LLHRAFSVFL…GLKLSPWFRL (153 aa)). The substrate site is built by R147 and K151. C163 is an active-site residue. Position 164 (S164) interacts with substrate. E223 and E225 together coordinate Mg(2+). The active site involves E225.

Belongs to the IPP isomerase type 1 family. Mg(2+) serves as cofactor.

It carries out the reaction isopentenyl diphosphate = dimethylallyl diphosphate. It functions in the pathway isoprenoid biosynthesis; dimethylallyl diphosphate biosynthesis; dimethylallyl diphosphate from isopentenyl diphosphate: step 1/1. It participates in porphyrin-containing compound metabolism; chlorophyll biosynthesis. Its function is as follows. Catalyzes the 1,3-allylic rearrangement of the homoallylic substrate isopentenyl (IPP) to its highly electrophilic allylic isomer, dimethylallyl diphosphate (DMAPP). The protein is Isopentenyl-diphosphate Delta-isomerase II (IPI2) of Camptotheca acuminata (Happy tree).